The following is a 187-amino-acid chain: Elongation factor P (187 aa).

The protein belongs to the elongation factor P family.

The protein localises to the cytoplasm. Its pathway is protein biosynthesis; polypeptide chain elongation. Involved in peptide bond synthesis. Stimulates efficient translation and peptide-bond synthesis on native or reconstituted 70S ribosomes in vitro. Probably functions indirectly by altering the affinity of the ribosome for aminoacyl-tRNA, thus increasing their reactivity as acceptors for peptidyl transferase. This Roseiflexus sp. (strain RS-1) protein is Elongation factor P.